The primary structure comprises 180 residues: D(1A) dopamine receptor (180 aa).

A helical membrane pass occupies residues 1-10 (NTLLVCAAVI). Topologically, residues 11 to 21 (RFRHLRSKVTN) are cytoplasmic. The helical transmembrane segment at 22–48 (FFVISLAVSDLLVAVLVMPWKAVAEIA) threads the bilayer. The Extracellular segment spans residues 49–57 (GFWPFGSFC). Cysteine 57 and cysteine 147 are oxidised to a cystine. A helical membrane pass occupies residues 58–80 (NIWVAFDIMCSTASILNLCVISV). The Cytoplasmic segment spans residues 81-99 (DRYWAISSPFRYERKMTPK). The helical transmembrane segment at 100 to 124 (AAFILIGVAWTLSVLISFIPVQLSW) threads the bilayer. Residues 125 to 153 (HKAKPTSPPDGNATSLDETVDNCDSSLSR) are Extracellular-facing. N-linked (GlcNAc...) asparagine glycosylation occurs at asparagine 136. The helical transmembrane segment at 154 to 179 (TYSISSSLVNFYNPVAIMXVTYTRIH) threads the bilayer. Position 180 (arginine 180) is a topological domain, cytoplasmic.

This sequence belongs to the G-protein coupled receptor 1 family. As to quaternary structure, interacts with DNAJC14 via its C-terminus. Interacts with DRD2. Interacts with DORIP1.

Its subcellular location is the cell membrane. The protein localises to the endoplasmic reticulum membrane. The protein resides in the cell projection. It is found in the cilium membrane. Dopamine receptor whose activity is mediated by G proteins which activate adenylyl cyclase. In Oryctolagus cuniculus (Rabbit), this protein is D(1A) dopamine receptor (DRD1).